The following is a 296-amino-acid chain: 33 kDa chaperonin (296 aa).

2 disulfides stabilise this stretch: C233–C235 and C267–C270.

This sequence belongs to the HSP33 family. Under oxidizing conditions two disulfide bonds are formed involving the reactive cysteines. Under reducing conditions zinc is bound to the reactive cysteines and the protein is inactive.

Its subcellular location is the cytoplasm. In terms of biological role, redox regulated molecular chaperone. Protects both thermally unfolding and oxidatively damaged proteins from irreversible aggregation. Plays an important role in the bacterial defense system toward oxidative stress. This Actinobacillus pleuropneumoniae serotype 3 (strain JL03) protein is 33 kDa chaperonin.